Here is a 601-residue protein sequence, read N- to C-terminus: Alpha-terpineol synthase, chloroplastic (601 aa).

The N-terminal 47 residues, 1-47 (MSTISIHHVGILRNPLHSKSKRASINKPWSLSLPRSSSASRLVEPCR), are a transit peptide targeting the chloroplast. The Mn(2+) site is built by Asp-357 and Asp-361. The short motif at 357-361 (DDVYD) is the DDXXD motif element. 2 homodimerization regions span residues 363-369 (YGTLDEL) and 435-471 (EAEWYKSGYTPSLEEYLTIAKISIASLTILLSVELSL). Positions 499 and 507 each coordinate Mn(2+).

This sequence belongs to the terpene synthase family. As to quaternary structure, homodimer. Mn(2+) is required as a cofactor. Requires Mg(2+) as cofactor.

It is found in the plastid. It localises to the chloroplast. The enzyme catalyses (2E)-geranyl diphosphate + H2O = (S)-alpha-terpineol + diphosphate. The catalysed reaction is (2E)-geranyl diphosphate + H2O = (R)-alpha-terpineol + diphosphate. The protein operates within secondary metabolite biosynthesis; terpenoid biosynthesis. Functionally, involved in the biosynthesis of phenolic monoterpenes natural products. Monoterpene synthase which catalyzes the conversion of geranyl diphosphate (GPP) to alpha-terpineol (isomer is not determined). The chain is Alpha-terpineol synthase, chloroplastic from Thymus caespititius (Cretan thyme).